Reading from the N-terminus, the 312-residue chain is Acetyl-coenzyme A carboxylase carboxyl transferase subunit alpha (312 aa).

One can recognise a CoA carboxyltransferase C-terminal domain in the interval 36-286; sequence NLEKEISKTY…ADYVKKSLNE (251 aa).

It belongs to the AccA family. As to quaternary structure, acetyl-CoA carboxylase is a heterohexamer composed of biotin carboxyl carrier protein (AccB), biotin carboxylase (AccC) and two subunits each of ACCase subunit alpha (AccA) and ACCase subunit beta (AccD).

It localises to the cytoplasm. The catalysed reaction is N(6)-carboxybiotinyl-L-lysyl-[protein] + acetyl-CoA = N(6)-biotinyl-L-lysyl-[protein] + malonyl-CoA. It functions in the pathway lipid metabolism; malonyl-CoA biosynthesis; malonyl-CoA from acetyl-CoA: step 1/1. Functionally, component of the acetyl coenzyme A carboxylase (ACC) complex. First, biotin carboxylase catalyzes the carboxylation of biotin on its carrier protein (BCCP) and then the CO(2) group is transferred by the carboxyltransferase to acetyl-CoA to form malonyl-CoA. The protein is Acetyl-coenzyme A carboxylase carboxyl transferase subunit alpha of Campylobacter jejuni subsp. doylei (strain ATCC BAA-1458 / RM4099 / 269.97).